A 540-amino-acid polypeptide reads, in one-letter code: Malolactic enzyme (540 aa).

The Proton donor role is filled by Tyr90. Lys163 (proton acceptor) is an active-site residue. Lys163 is a binding site for substrate. Residues Glu234, Asp235, and Asp258 each coordinate Mn(2+). Residues 291-294 (GGSA), Asn403, and Asn448 each bind NAD(+). Position 448 (Asn448) interacts with substrate.

Belongs to the malic enzymes family. In terms of assembly, homodimer. The cofactor is Mn(2+). It depends on NAD(+) as a cofactor.

It carries out the reaction (S)-malate + H(+) = (S)-lactate + CO2. Involved in the malolactic fermentation (MLF) of wine, which results in a natural decrease in acidity and favorable changes in wine flavors. Catalyzes the decarboxylation of L-malate to L-lactate. In Lactococcus lactis subsp. lactis (strain IL1403) (Streptococcus lactis), this protein is Malolactic enzyme.